A 90-amino-acid polypeptide reads, in one-letter code: Large ribosomal subunit protein bL27 (90 aa).

Positions 1–24 are disordered; that stretch reads MAHKKGTGSTRNGRDSNSKRLGVK.

It belongs to the bacterial ribosomal protein bL27 family.

The chain is Large ribosomal subunit protein bL27 from Prochlorococcus marinus (strain NATL1A).